Here is a 178-residue protein sequence, read N- to C-terminus: Adenine phosphoribosyltransferase (178 aa).

The protein belongs to the purine/pyrimidine phosphoribosyltransferase family. As to quaternary structure, homodimer.

The protein localises to the cytoplasm. The enzyme catalyses AMP + diphosphate = 5-phospho-alpha-D-ribose 1-diphosphate + adenine. It functions in the pathway purine metabolism; AMP biosynthesis via salvage pathway; AMP from adenine: step 1/1. Functionally, catalyzes a salvage reaction resulting in the formation of AMP, that is energically less costly than de novo synthesis. The protein is Adenine phosphoribosyltransferase of Pseudoalteromonas atlantica (strain T6c / ATCC BAA-1087).